Here is a 326-residue protein sequence, read N- to C-terminus: Phospho-N-acetylmuramoyl-pentapeptide-transferase (326 aa).

9 helical membrane-spanning segments follow: residues 3–23 (ISIS…PAFI), 51–71 (TMGG…LALF), 79–99 (VGMI…DDFL), 115–135 (LALQ…GGDM), 138–158 (VFSY…FWLV), 169–189 (GIDG…GVIA), 195–215 (MDIL…FVFN), 221–243 (VFMG…MALH), and 306–326 (FFFW…LYLM).

Belongs to the glycosyltransferase 4 family. MraY subfamily. It depends on Mg(2+) as a cofactor.

It is found in the cell membrane. It carries out the reaction UDP-N-acetyl-alpha-D-muramoyl-L-alanyl-gamma-D-glutamyl-L-lysyl-D-alanyl-D-alanine + di-trans,octa-cis-undecaprenyl phosphate = Mur2Ac(oyl-L-Ala-gamma-D-Glu-L-Lys-D-Ala-D-Ala)-di-trans,octa-cis-undecaprenyl diphosphate + UMP. The protein operates within cell wall biogenesis; peptidoglycan biosynthesis. Functionally, catalyzes the initial step of the lipid cycle reactions in the biosynthesis of the cell wall peptidoglycan: transfers peptidoglycan precursor phospho-MurNAc-pentapeptide from UDP-MurNAc-pentapeptide onto the lipid carrier undecaprenyl phosphate, yielding undecaprenyl-pyrophosphoryl-MurNAc-pentapeptide, known as lipid I. In Streptococcus pneumoniae (strain ATCC 700669 / Spain 23F-1), this protein is Phospho-N-acetylmuramoyl-pentapeptide-transferase.